Here is a 366-residue protein sequence, read N- to C-terminus: Flagellar P-ring protein (366 aa).

The first 23 residues, 1-23, serve as a signal peptide directing secretion; it reads MRTLKIFALAVSLLSMLAAPVQA.

This sequence belongs to the FlgI family. The basal body constitutes a major portion of the flagellar organelle and consists of four rings (L,P,S, and M) mounted on a central rod.

It is found in the periplasm. The protein localises to the bacterial flagellum basal body. In terms of biological role, assembles around the rod to form the L-ring and probably protects the motor/basal body from shearing forces during rotation. The sequence is that of Flagellar P-ring protein from Idiomarina loihiensis (strain ATCC BAA-735 / DSM 15497 / L2-TR).